The chain runs to 576 residues: Eukaryotic translation initiation factor 3 subunit D (576 aa).

The tract at residues Asp-103–Arg-176 is disordered. A compositionally biased stretch (gly residues) spans Gly-110 to Gly-122. Basic and acidic residues predominate over residues Gly-165–Arg-176. Positions Thr-304–Pro-318 are RNA gate.

It belongs to the eIF-3 subunit D family. Component of the eukaryotic translation initiation factor 3 (eIF-3) complex.

Its subcellular location is the cytoplasm. Its function is as follows. mRNA cap-binding component of the eukaryotic translation initiation factor 3 (eIF-3) complex, which is involved in protein synthesis of a specialized repertoire of mRNAs and, together with other initiation factors, stimulates binding of mRNA and methionyl-tRNAi to the 40S ribosome. The eIF-3 complex specifically targets and initiates translation of a subset of mRNAs involved in cell proliferation. In the eIF-3 complex, eif3d specifically recognizes and binds the 7-methylguanosine cap of a subset of mRNAs. This is Eukaryotic translation initiation factor 3 subunit D from Botryotinia fuckeliana (strain B05.10) (Noble rot fungus).